We begin with the raw amino-acid sequence, 906 residues long: Toll-like receptor 12 (906 aa).

The signal sequence occupies residues 1 to 21; that stretch reads MGRYWLLPGLLLSLPLVTGWS. At 22–709 the chain is on the extracellular side; sequence TSNCLVTEGS…DHCPQTLELK (688 aa). N-linked (GlcNAc...) asparagine glycosylation is present at asparagine 59. 15 LRR repeats span residues 91 to 114, 115 to 140, 142 to 170, 198 to 222, 224 to 247, 267 to 290, 291 to 314, 316 to 338, 341 to 364, 366 to 388, 389 to 412, 414 to 436, 462 to 484, 485 to 508, and 510 to 533; these read FPGLKVLALSLHLTQLLPGALRGL, GQLQSLSFFDSPLRRSLFLPPDAFSD, ISLQRLHISGPCLDKKAGIRLPPGLQWLG, SWTLQKLDLSSNWKLKMASPGSLQG, QVEILDLTRTPLDAVWLKGLGLQK, HFELQGLIVKESKIGSISQEALAS, CHSLKTLGLSSTGLTKLPPGFLTA, PRLQRLELSGNQLQSAVLCMNET, VSGLTTLDLSGNRLRILPPAAFSC, PHLRELLLRYNQLLSLEGYLFQE, LQQLETLKLDGNPLLHLGKNWLAA, PALTTLSLLDTQIRMSPEPGFWG, LTSLELHIASGTTEHWTLSPAIF, PSLETLTISGGGLKLKLGSQNASG, and FPALQKLSLLKNSLDAFCSQGTSN. N-linked (GlcNAc...) asparagine glycosylation occurs at asparagine 336. N-linked (GlcNAc...) asparagine glycosylation is present at asparagine 505. An N-linked (GlcNAc...) asparagine glycan is attached at asparagine 552. 2 LRR repeats span residues 562 to 586 and 591 to 614; these read LPSLRELKLASLQSITQPRSVQLEE and LPQLQALVLSSTGLKSLSAAAFQR. A helical transmembrane segment spans residues 710–730; the sequence is LFLASSALVFMLIALPLLQEA. The Cytoplasmic segment spans residues 731–906; that stretch reads RNSWIPYLQA…FWTWLRSRLG (176 aa). One can recognise a TIR domain in the interval 759-905; it reads FLFDVFVSHC…GFWTWLRSRL (147 aa).

It belongs to the Toll-like receptor family. Binds MYD88 via their respective TIR domains. In terms of tissue distribution, macrophages, liver, kidney and bladder epithelial cells.

The protein resides in the membrane. Participates in the innate immune response to microbial agents. Acts via MYD88 and TRAF6, leading to NF-kappa-B activation, cytokine secretion and the inflammatory response. Plays a role in preventing infection of internal organs of the urogenital system. This Mus musculus (Mouse) protein is Toll-like receptor 12.